The primary structure comprises 183 residues: uncharacterized protein (183 aa).

Low complexity predominate over residues 105–149 (YNTNNSNTNTNYNNNNNNNNNNNNNNNNNNNKNNNNNNNNNNSNS). Residues 105 to 151 (YNTNNSNTNTNYNNNNNNNNNNNNNNNNNNNKNNNNNNNNNNSNSKI) are disordered.

This is an uncharacterized protein from Dictyostelium discoideum (Social amoeba).